The sequence spans 503 residues: Glycerol kinase (503 aa).

Residue Thr-12 participates in ADP binding. Positions 12, 13, and 14 each coordinate ATP. Residue Thr-12 coordinates sn-glycerol 3-phosphate. Arg-16 provides a ligand contact to ADP. 4 residues coordinate sn-glycerol 3-phosphate: Arg-82, Glu-83, Tyr-134, and Asp-243. Residues Arg-82, Glu-83, Tyr-134, Asp-243, and Gln-244 each coordinate glycerol. The ADP site is built by Thr-265 and Gly-308. 4 residues coordinate ATP: Thr-265, Gly-308, Gln-312, and Gly-412. Gly-412 serves as a coordination point for ADP.

It belongs to the FGGY kinase family.

The enzyme catalyses glycerol + ATP = sn-glycerol 3-phosphate + ADP + H(+). It functions in the pathway polyol metabolism; glycerol degradation via glycerol kinase pathway; sn-glycerol 3-phosphate from glycerol: step 1/1. With respect to regulation, inhibited by fructose 1,6-bisphosphate (FBP). In terms of biological role, key enzyme in the regulation of glycerol uptake and metabolism. Catalyzes the phosphorylation of glycerol to yield sn-glycerol 3-phosphate. The chain is Glycerol kinase from Nitrobacter hamburgensis (strain DSM 10229 / NCIMB 13809 / X14).